We begin with the raw amino-acid sequence, 582 residues long: Mitogen-activated protein kinase 17 (582 aa).

Positions 22–61 (SSSFHLTTTGDDTVKDLHDPRREDAEGDGWEEVHEGPESD) are disordered. Residues 33–45 (DTVKDLHDPRRED) are compositionally biased toward basic and acidic residues. The region spanning 105 to 396 (YKVSEVIGKG…AEEALTDPYF (292 aa)) is the Protein kinase domain. Residues 111–119 (IGKGSYGVV) and Lys134 each bind ATP. Asp231 acts as the Proton acceptor in catalysis. The residue at position 267 (Thr267) is a Phosphothreonine. A TXY motif is present at residues 267–269 (TDY). Tyr269 carries the post-translational modification Phosphotyrosine. Disordered stretches follow at residues 474-502 (EGVSKGEKSSPQLRQNASLPRERAIGNKH) and 542-582 (ISAS…QLKT). Polar residues predominate over residues 482–491 (SSPQLRQNAS). The span at 493 to 502 (PRERAIGNKH) shows a compositional bias: basic and acidic residues. Residues 557-572 (DQEDSLTESMDETADE) show a composition bias toward acidic residues.

Belongs to the protein kinase superfamily. CMGC Ser/Thr protein kinase family. MAP kinase subfamily. Dually phosphorylated on Thr-267 and Tyr-269, which activates the enzyme.

It carries out the reaction L-seryl-[protein] + ATP = O-phospho-L-seryl-[protein] + ADP + H(+). The enzyme catalyses L-threonyl-[protein] + ATP = O-phospho-L-threonyl-[protein] + ADP + H(+). Activated by threonine and tyrosine phosphorylation. This chain is Mitogen-activated protein kinase 17 (MPK17), found in Oryza sativa subsp. japonica (Rice).